The primary structure comprises 264 residues: MARRYDSRTTIFSPEGRLYQVEYAMEAISHAGTCLGILAEDGILLAAECRSTNKLLDSAIPSEKIYRLNDNMVCSVAGITSDANVLTSELRLIAQRYQFSYGEVIPCEQLVSHLCDIKQAYTQYGGKRPFGVSLLYMGWDNKYGYQLYQSDPSGNYGGWKATCIGNNFGAAISMLKQELADKENVKLTLADAKDLAIKVLSMTLDTTKLTPEKVEMATLQRVDNKTVYSVLEKPDVEKLIEKYTKVQAEAEAAKKEKQAKQPTK.

This sequence belongs to the peptidase T1A family. The 26S proteasome consists of a 20S proteasome core and two 19S regulatory subunits. The 20S proteasome core is composed of 28 subunits that are arranged in four stacked rings, resulting in a barrel-shaped structure. The two end rings are each formed by seven alpha subunits, and the two central rings are each formed by seven beta subunits. The catalytic chamber with the active sites is on the inside of the barrel. Interacts with PI31.

The protein localises to the cytoplasm. Its subcellular location is the nucleus. Functionally, the proteasome is a multicatalytic proteinase complex which is characterized by its ability to cleave peptides with Arg, Phe, Tyr, Leu, and Glu adjacent to the leaving group at neutral or slightly basic pH. The proteasome has an ATP-dependent proteolytic activity. This chain is Proteasome subunit alpha type-4 (Prosalpha3), found in Drosophila melanogaster (Fruit fly).